Consider the following 358-residue polypeptide: Alanine racemase (358 aa).

Lysine 35 serves as the catalytic Proton acceptor; specific for D-alanine. The residue at position 35 (lysine 35) is an N6-(pyridoxal phosphate)lysine. Arginine 131 provides a ligand contact to substrate. The active-site Proton acceptor; specific for L-alanine is the tyrosine 253. Residue methionine 301 coordinates substrate.

Belongs to the alanine racemase family. Pyridoxal 5'-phosphate is required as a cofactor.

It catalyses the reaction L-alanine = D-alanine. The protein operates within amino-acid biosynthesis; D-alanine biosynthesis; D-alanine from L-alanine: step 1/1. Functionally, catalyzes the interconversion of L-alanine and D-alanine. May also act on other amino acids. The sequence is that of Alanine racemase (alr) from Alteromonas mediterranea (strain DSM 17117 / CIP 110805 / LMG 28347 / Deep ecotype).